The primary structure comprises 161 residues: E3 ubiquitin ligase complex SCF subunit sconC (161 aa).

The tract at residues 102-161 is interaction with the F-box domain of F-box proteins; it reads ILAANYLDIKGLLDVGCKTVANMIKGKSPEEIRKTFNIQNDFTPEEEDQIRRENEWAEDR.

Belongs to the SKP1 family. Component of the SCF (SKP1-CUL1-F-box protein) E3 ubiquitin ligase complexes.

Its pathway is protein modification; protein ubiquitination. In terms of biological role, essential component of the SCF (SKP1-CUL1-F-box protein) E3 ubiquitin ligase complexes, which mediate the ubiquitination and subsequent proteasomal degradation of target proteins. Controls sulfur metabolite repression, probably by mediating the inactivation or degradation of the metR transcription factor. The sequence is that of E3 ubiquitin ligase complex SCF subunit sconC (sconC) from Aspergillus flavus (strain ATCC 200026 / FGSC A1120 / IAM 13836 / NRRL 3357 / JCM 12722 / SRRC 167).